Here is a 64-residue protein sequence, read N- to C-terminus: Peptide Ctri9677 (64 aa).

The signal sequence occupies residues 1 to 22; sequence MKNNTILFTFLIVFLIASQIEA. Leucine 36 is subject to Leucine amide. A propeptide spanning residues 40-64 is cleaved from the precursor; it reads SEDREFFDFFTDDNLAALEKALKEY.

This sequence belongs to the non-disulfide-bridged peptide (NDBP) superfamily. Short antimicrobial peptide (group 4) family. Expressed by the venom gland.

It localises to the secreted. In terms of biological role, antimicrobial peptide. The polypeptide is Peptide Ctri9677 (Chaerilus tricostatus (Scorpion)).